Here is a 329-residue protein sequence, read N- to C-terminus: MSASPLKVAVTGAAGQIGYSLLFRLASGSLLGPDRPIELRLLEIEPALKALEGVVMELDDCAFPLLSGVEIGSDANKIFDGANLALLVGARPRGPGMERSDLLEANGAIFTAQGKALNEVAADDIRVGVTGNPANTNALIAMTNAPDIPRERFSALTRLDHNRAISQLAAKTGVAVTDIKKMTIWGNHSATQYPDLFHAEVKGKNAAEVVNDQAWIEEYFIPTVAKRGATIIDARGASSAASAASASVDAARSWLLGTPADDWVSMAVLSDGSYGVPEGLISSFPVTTKDGNWSIVKGLEIDEFSRGRIDKTAAELADERKAVTELGLI.

Position 12-18 (12-18 (GAAGQIG)) interacts with NAD(+). Positions 93 and 99 each coordinate substrate. NAD(+)-binding positions include asparagine 106, glutamine 113, and 130–132 (TGN). Residues asparagine 132 and arginine 163 each contribute to the substrate site. Residue histidine 188 is the Proton acceptor of the active site.

Belongs to the LDH/MDH superfamily. MDH type 2 family.

It catalyses the reaction (S)-malate + NAD(+) = oxaloacetate + NADH + H(+). In terms of biological role, catalyzes the reversible oxidation of malate to oxaloacetate. This Mycobacterium ulcerans (strain Agy99) protein is Malate dehydrogenase.